The following is a 481-amino-acid chain: Glutamate--tRNA ligase (481 aa).

Positions 9-19 (PSPTGNLHIGT) match the 'HIGH' region motif. Residues 247–251 (KLSKR) carry the 'KMSKS' region motif. K250 is an ATP binding site.

This sequence belongs to the class-I aminoacyl-tRNA synthetase family. Glutamate--tRNA ligase type 1 subfamily. Monomer.

Its subcellular location is the cytoplasm. It carries out the reaction tRNA(Glu) + L-glutamate + ATP = L-glutamyl-tRNA(Glu) + AMP + diphosphate. In terms of biological role, catalyzes the attachment of glutamate to tRNA(Glu) in a two-step reaction: glutamate is first activated by ATP to form Glu-AMP and then transferred to the acceptor end of tRNA(Glu). This chain is Glutamate--tRNA ligase, found in Nostoc punctiforme (strain ATCC 29133 / PCC 73102).